The chain runs to 506 residues: Maturase K (506 aa).

This sequence belongs to the intron maturase 2 family. MatK subfamily.

It is found in the plastid. Its subcellular location is the chloroplast. Its function is as follows. Usually encoded in the trnK tRNA gene intron. Probably assists in splicing its own and other chloroplast group II introns. The sequence is that of Maturase K from Jurinea cyanoides.